The sequence spans 65 residues: Large ribosomal subunit protein bL35 (65 aa).

It belongs to the bacterial ribosomal protein bL35 family.

This chain is Large ribosomal subunit protein bL35, found in Caldicellulosiruptor saccharolyticus (strain ATCC 43494 / DSM 8903 / Tp8T 6331).